Reading from the N-terminus, the 362-residue chain is Leucoanthocyanidin dioxygenase (362 aa).

A Fe2OG dioxygenase domain is found at 211 to 313 (MEELLLQKKI…RISWAVFCEP (103 aa)). Residues His-238, Asp-240, and His-294 each coordinate Fe cation.

It belongs to the iron/ascorbate-dependent oxidoreductase family. It depends on Fe cation as a cofactor. Requires L-ascorbate as cofactor.

The catalysed reaction is a (2R,3S,4S)-leucoanthocyanidin + 2-oxoglutarate + O2 = a 4-H-anthocyanidin with a 3-hydroxy group + succinate + CO2 + 2 H2O. The protein operates within pigment biosynthesis; anthocyanin biosynthesis. Oxidation of leucoanthocyanidins into anthocyanidins. This chain is Leucoanthocyanidin dioxygenase, found in Vitis vinifera (Grape).